The sequence spans 352 residues: Deoxyhypusine synthase-like protein (352 aa).

Belongs to the deoxyhypusine synthase family.

The polypeptide is Deoxyhypusine synthase-like protein (Coxiella burnetii (strain Dugway 5J108-111)).